A 1120-amino-acid chain; its full sequence is Phosphatidylinositide phosphatase SAC2 (1120 aa).

Positions 167 to 518 (YKIFMDSDSF…GDTISRQYAG (352 aa)) constitute an SAC domain. In terms of domain architecture, hSac2 spans 593–760 (RGAQEQVSLL…RHSKPHEDIM (168 aa)). Disordered stretches follow at residues 837 to 881 (SSLE…SREN) and 979 to 1008 (PAPKPQGPQVPLAPDAKLGSSHSQNQLPRP). A compositionally biased stretch (basic and acidic residues) spans 851–860 (LKDHGPHSEE). Polar residues-rich tracts occupy residues 864-879 (DSDSYNSDEQPCSGSR) and 998-1007 (SSHSQNQLPR).

It is found in the membrane. The protein resides in the clathrin-coated pit. The protein localises to the early endosome. It localises to the recycling endosome. The enzyme catalyses a myo-inositol phosphate + H2O = myo-inositol + phosphate. Its function is as follows. Inositol 4-phosphatase which mainly acts on phosphatidylinositol 4-phosphate. May be functionally linked to OCRL, which converts phosphatidylinositol 4,5-bisphosphate to phosphatidylinositol, for a sequential dephosphorylation of phosphatidylinositol 4,5-bisphosphate at the 5 and 4 position of inositol, thus playing an important role in the endocytic recycling. The chain is Phosphatidylinositide phosphatase SAC2 from Danio rerio (Zebrafish).